The chain runs to 279 residues: Acetylglutamate kinase (279 aa).

Residues 64 to 65 (GG), Arg86, and Asn177 contribute to the substrate site.

It belongs to the acetylglutamate kinase family. ArgB subfamily.

Its subcellular location is the cytoplasm. The enzyme catalyses N-acetyl-L-glutamate + ATP = N-acetyl-L-glutamyl 5-phosphate + ADP. The protein operates within amino-acid biosynthesis; L-arginine biosynthesis; N(2)-acetyl-L-ornithine from L-glutamate: step 2/4. In terms of biological role, catalyzes the ATP-dependent phosphorylation of N-acetyl-L-glutamate. This is Acetylglutamate kinase from Campylobacter jejuni (strain RM1221).